Consider the following 84-residue polypeptide: Acetylcholine receptor subunit alpha (84 aa).

2 cysteine pairs are disulfide-bonded: C7-C21 and C71-C72. N20 is a glycosylation site (N-linked (GlcNAc...) asparagine).

The protein belongs to the ligand-gated ion channel (TC 1.A.9) family. Acetylcholine receptor (TC 1.A.9.1) subfamily. Alpha-1/CHRNA1 sub-subfamily. One of the alpha chains that assemble within the acetylcholine receptor, a pentamer of two alpha chains, a beta, a delta, and a gamma (in immature muscle) or epsilon (in mature muscle) chains. The muscle heteropentamer composed of alpha-1, beta-1, delta, epsilon subunits interacts with the alpha-conotoxin ImII.

Its subcellular location is the postsynaptic cell membrane. The protein resides in the cell membrane. It catalyses the reaction K(+)(in) = K(+)(out). It carries out the reaction Na(+)(in) = Na(+)(out). Upon acetylcholine binding, the AChR responds by an extensive change in conformation that affects all subunits and leads to opening of an ion-conducting channel across the plasma membrane. The protein is Acetylcholine receptor subunit alpha (CHRNA1) of Felis catus (Cat).